Here is a 35-residue protein sequence, read N- to C-terminus: Flavodoxin (35 aa).

Positions 4 to 35 (IGLFYGTZTGKTESVAEIIDEFGDEVVTLDID) constitute a Flavodoxin-like domain.

Belongs to the flavodoxin family. Requires FMN as cofactor.

Low-potential electron donor to a number of redox enzymes. This chain is Flavodoxin, found in Nostoc sp. (strain MAC).